Consider the following 146-residue polypeptide: D-aminoacyl-tRNA deacylase (146 aa).

The Gly-cisPro motif, important for rejection of L-amino acids signature appears at 137–138; that stretch reads GP.

It belongs to the DTD family. Homodimer.

The protein localises to the cytoplasm. It carries out the reaction glycyl-tRNA(Ala) + H2O = tRNA(Ala) + glycine + H(+). The catalysed reaction is a D-aminoacyl-tRNA + H2O = a tRNA + a D-alpha-amino acid + H(+). Its function is as follows. An aminoacyl-tRNA editing enzyme that deacylates mischarged D-aminoacyl-tRNAs. Also deacylates mischarged glycyl-tRNA(Ala), protecting cells against glycine mischarging by AlaRS. Acts via tRNA-based rather than protein-based catalysis; rejects L-amino acids rather than detecting D-amino acids in the active site. By recycling D-aminoacyl-tRNA to D-amino acids and free tRNA molecules, this enzyme counteracts the toxicity associated with the formation of D-aminoacyl-tRNA entities in vivo and helps enforce protein L-homochirality. This chain is D-aminoacyl-tRNA deacylase, found in Anoxybacillus flavithermus (strain DSM 21510 / WK1).